The following is a 456-amino-acid chain: Glutamate-gated chloride channel (456 aa).

The N-terminal stretch at 1 to 22 is a signal peptide; the sequence is MGSGHYFWAILYFASLCSASLA. At 23-245 the chain is on the extracellular side; sequence NNAKINFREK…VDLLFKREFS (223 aa). Residues Arg71, Arg90, and Ser154 each coordinate L-glutamate. A disulfide bond links Cys163 and Cys177. Ser183 serves as a coordination point for L-glutamate. A disulfide bond links Cys222 and Cys233. A helical transmembrane segment spans residues 246–268; that stretch reads YYLIQIYIPCCMLVIVSWVSFWL. The Cytoplasmic portion of the chain corresponds to 269-273; the sequence is DQGAV. A helical transmembrane segment spans residues 274–295; it reads PARVSLGVTTLLTMATQTSGIN. Residues 296–302 lie on the Extracellular side of the membrane; sequence ASLPPVS. Residues 303-323 form a helical membrane-spanning segment; the sequence is YTKAIDVWTGVCLTFVFGALL. Topologically, residues 324 to 426 are cytoplasmic; that stretch reads EFALVNYASR…RQCSRSKRID (103 aa). Residues 427-450 form a helical membrane-spanning segment; it reads VISRITFPLVFALFNLVYWSTYLF. At 451 to 456 the chain is on the extracellular side; the sequence is REEEDE.

Belongs to the ligand-gated ion channel (TC 1.A.9) family. Glutamate-gated chloride channel (TC 1.A.9.4) subfamily. In terms of assembly, pentamer. Homomultimer. In terms of tissue distribution, expressed in the medulla layers (at protein level). Expressed in all major ON pathway medulla neurons (Mi1, Tm3, Mi4, and Mi9) and in OFF pathway neurons (Tm1, Tm2, Tm4, and Tm9).

The protein localises to the postsynaptic cell membrane. It is found in the cell membrane. Its activity is regulated as follows. Glutamate binding triggers a rapidly reversible current, while the anti-helmintic drug ivermectin triggers a permanently open channel configuration. Inhibited by picrotoxin. In terms of biological role, glutamate-gated chloride channel subunit. Together with Gamma-aminobutyric acid receptor Rdl, plays an important role in the visual response by regulating the activity of ON/OFF-selective neurons. This Drosophila melanogaster (Fruit fly) protein is Glutamate-gated chloride channel (GluClalpha).